Consider the following 316-residue polypeptide: M-phase inducer phosphatase cdc-25.3 (316 aa).

Residues 35 to 65 (QNRQHSSAISHISNSSPPTRKRSIDGGYTSG) are disordered. Low complexity predominate over residues 39–50 (HSSAISHISNSS). The 107-residue stretch at 136 to 242 (FMQKYILIDC…FYAFTRGLEK (107 aa)) folds into the Rhodanese domain.

It belongs to the MPI phosphatase family.

The catalysed reaction is O-phospho-L-tyrosyl-[protein] + H2O = L-tyrosyl-[protein] + phosphate. The sequence is that of M-phase inducer phosphatase cdc-25.3 (cdc-25.3) from Caenorhabditis elegans.